Reading from the N-terminus, the 454-residue chain is tRNA modification GTPase MnmE (454 aa).

(6S)-5-formyl-5,6,7,8-tetrahydrofolate-binding residues include R23, E80, and K120. In terms of domain architecture, TrmE-type G spans 216–377; it reads GMKVVIAGRP…LREHLKQSMG (162 aa). Position 226 (N226) interacts with K(+). Residues 226-231, 245-251, and 270-273 each bind GTP; these read NAGKSS, TDIAGTT, and DTAG. Residue S230 participates in Mg(2+) binding. Residues T245, I247, and T250 each coordinate K(+). T251 provides a ligand contact to Mg(2+). Residue K454 participates in (6S)-5-formyl-5,6,7,8-tetrahydrofolate binding.

It belongs to the TRAFAC class TrmE-Era-EngA-EngB-Septin-like GTPase superfamily. TrmE GTPase family. In terms of assembly, homodimer. Heterotetramer of two MnmE and two MnmG subunits. K(+) is required as a cofactor.

It localises to the cytoplasm. Its function is as follows. Exhibits a very high intrinsic GTPase hydrolysis rate. Involved in the addition of a carboxymethylaminomethyl (cmnm) group at the wobble position (U34) of certain tRNAs, forming tRNA-cmnm(5)s(2)U34. This Mannheimia succiniciproducens (strain KCTC 0769BP / MBEL55E) protein is tRNA modification GTPase MnmE.